Reading from the N-terminus, the 201-residue chain is Large ribosomal subunit protein uL4 (201 aa).

The interval 45–66 (AQLTRSEVSGGGKKPWRQKGTG) is disordered.

It belongs to the universal ribosomal protein uL4 family. Part of the 50S ribosomal subunit.

Its function is as follows. One of the primary rRNA binding proteins, this protein initially binds near the 5'-end of the 23S rRNA. It is important during the early stages of 50S assembly. It makes multiple contacts with different domains of the 23S rRNA in the assembled 50S subunit and ribosome. Functionally, forms part of the polypeptide exit tunnel. This chain is Large ribosomal subunit protein uL4, found in Aeromonas hydrophila subsp. hydrophila (strain ATCC 7966 / DSM 30187 / BCRC 13018 / CCUG 14551 / JCM 1027 / KCTC 2358 / NCIMB 9240 / NCTC 8049).